Consider the following 118-residue polypeptide: Mating-type P-specific polypeptide Pc (118 aa).

Positions Lys29–Arg97 form a DNA-binding region, HMG box.

The protein localises to the nucleus. Its function is as follows. Mating type proteins are sequence specific DNA-binding proteins that act as master switches in yeast differentiation by controlling gene expression in a cell type-specific fashion. Required for conjugation and efficient meiosis. This Schizosaccharomyces pombe (Fission yeast) protein is Mating-type P-specific polypeptide Pc (mat2-Pc).